The chain runs to 74 residues: RNA-binding protein Hfq (74 aa).

Residues 9 to 69 form the Sm domain; that stretch reads DQFLNQLRKD…ISTFAPEKNV (61 aa).

The protein belongs to the Hfq family. As to quaternary structure, homohexamer.

In terms of biological role, RNA chaperone that binds small regulatory RNA (sRNAs) and mRNAs to facilitate mRNA translational regulation in response to envelope stress, environmental stress and changes in metabolite concentrations. Also binds with high specificity to tRNAs. This Geobacillus sp. (strain WCH70) protein is RNA-binding protein Hfq.